A 427-amino-acid chain; its full sequence is 3-phosphoshikimate 1-carboxyvinyltransferase (427 aa).

The 3-phosphoshikimate site is built by Lys-22, Ser-23, and Arg-27. Lys-22 provides a ligand contact to phosphoenolpyruvate. Residues Gly-96 and Arg-124 each contribute to the phosphoenolpyruvate site. 7 residues coordinate 3-phosphoshikimate: Ser-169, Ser-170, Gln-171, Ser-197, Asp-313, Asn-336, and Lys-340. A phosphoenolpyruvate-binding site is contributed by Gln-171. Catalysis depends on Asp-313, which acts as the Proton acceptor. Phosphoenolpyruvate contacts are provided by Arg-344, Arg-386, and Lys-411.

This sequence belongs to the EPSP synthase family. In terms of assembly, monomer.

It is found in the cytoplasm. The catalysed reaction is 3-phosphoshikimate + phosphoenolpyruvate = 5-O-(1-carboxyvinyl)-3-phosphoshikimate + phosphate. The protein operates within metabolic intermediate biosynthesis; chorismate biosynthesis; chorismate from D-erythrose 4-phosphate and phosphoenolpyruvate: step 6/7. Catalyzes the transfer of the enolpyruvyl moiety of phosphoenolpyruvate (PEP) to the 5-hydroxyl of shikimate-3-phosphate (S3P) to produce enolpyruvyl shikimate-3-phosphate and inorganic phosphate. In Escherichia coli O127:H6 (strain E2348/69 / EPEC), this protein is 3-phosphoshikimate 1-carboxyvinyltransferase.